Here is a 182-residue protein sequence, read N- to C-terminus: Lipid A acyltransferase PagP (182 aa).

The N-terminal stretch at 1 to 21 is a signal peptide; the sequence is MTQYFRALAFFLLLVPATAMA. Cys22 carries the N-palmitoyl cysteine lipid modification. Residue Cys22 is the site of S-diacylglycerol cysteine attachment. Active-site residues include His55, Asp98, and Ser99.

Belongs to the lipid A palmitoyltransferase family. In terms of assembly, homodimer.

The protein resides in the cell outer membrane. The enzyme catalyses a lipid A + a 1,2-diacyl-sn-glycero-3-phosphocholine = a hepta-acyl lipid A + a 2-acyl-sn-glycero-3-phosphocholine. The catalysed reaction is a lipid IVA + a 1,2-diacyl-sn-glycero-3-phosphocholine = a lipid IVB + a 2-acyl-sn-glycero-3-phosphocholine. It carries out the reaction a lipid IIA + a 1,2-diacyl-sn-glycero-3-phosphocholine = a lipid IIB + a 2-acyl-sn-glycero-3-phosphocholine. In terms of biological role, transfers a fatty acid residue from the sn-1 position of a phospholipid to the N-linked hydroxyfatty acid chain on the proximal unit of lipid A or its precursors. This Bordetella parapertussis (strain 12822 / ATCC BAA-587 / NCTC 13253) protein is Lipid A acyltransferase PagP.